A 440-amino-acid chain; its full sequence is ATP-dependent protease ATPase subunit HslU (440 aa).

ATP-binding positions include Ile-18, 60-65 (GVGKTE), Asp-253, Glu-318, and Arg-390.

It belongs to the ClpX chaperone family. HslU subfamily. In terms of assembly, a double ring-shaped homohexamer of HslV is capped on each side by a ring-shaped HslU homohexamer. The assembly of the HslU/HslV complex is dependent on binding of ATP.

It is found in the cytoplasm. Functionally, ATPase subunit of a proteasome-like degradation complex; this subunit has chaperone activity. The binding of ATP and its subsequent hydrolysis by HslU are essential for unfolding of protein substrates subsequently hydrolyzed by HslV. HslU recognizes the N-terminal part of its protein substrates and unfolds these before they are guided to HslV for hydrolysis. This chain is ATP-dependent protease ATPase subunit HslU, found in Shewanella oneidensis (strain ATCC 700550 / JCM 31522 / CIP 106686 / LMG 19005 / NCIMB 14063 / MR-1).